Here is an 82-residue protein sequence, read N- to C-terminus: MGRQFGHLTRVRHVITYSLSPFEQRAFPHYFSKGIPNVLRRTRACILRVAPPFVAFYLVYTWGTQEFEKSKRKNPAAYENDR.

At 2 to 39 (GRQFGHLTRVRHVITYSLSPFEQRAFPHYFSKGIPNVL) the chain is on the mitochondrial matrix side. An N6-acetyllysine; alternate modification is found at K33. N6-succinyllysine; alternate is present on K33. The helical transmembrane segment at 40-68 (RRTRACILRVAPPFVAFYLVYTWGTQEFE) threads the bilayer. Topologically, residues 69 to 82 (KSKRKNPAAYENDR) are mitochondrial intermembrane.

This sequence belongs to the UQCRQ/QCR8 family. Component of the ubiquinol-cytochrome c oxidoreductase (cytochrome b-c1 complex, complex III, CIII), a multisubunit enzyme composed of 11 subunits. The complex is composed of 3 respiratory subunits cytochrome b, cytochrome c1 and Rieske protein UQCRFS1, 2 core protein subunits UQCRC1/QCR1 and UQCRC2/QCR2, and 6 low-molecular weight protein subunits UQCRH/QCR6, UQCRB/QCR7, UQCRQ/QCR8, UQCR10/QCR9, UQCR11/QCR10 and subunit 9, the cleavage product of Rieske protein UQCRFS1. The complex exists as an obligatory dimer and forms supercomplexes (SCs) in the inner mitochondrial membrane with NADH-ubiquinone oxidoreductase (complex I, CI) and cytochrome c oxidase (complex IV, CIV), resulting in different assemblies (supercomplex SCI(1)III(2)IV(1) and megacomplex MCI(2)III(2)IV(2)). Interacts with UQCC6.

It is found in the mitochondrion inner membrane. Component of the ubiquinol-cytochrome c oxidoreductase, a multisubunit transmembrane complex that is part of the mitochondrial electron transport chain which drives oxidative phosphorylation. The respiratory chain contains 3 multisubunit complexes succinate dehydrogenase (complex II, CII), ubiquinol-cytochrome c oxidoreductase (cytochrome b-c1 complex, complex III, CIII) and cytochrome c oxidase (complex IV, CIV), that cooperate to transfer electrons derived from NADH and succinate to molecular oxygen, creating an electrochemical gradient over the inner membrane that drives transmembrane transport and the ATP synthase. The cytochrome b-c1 complex catalyzes electron transfer from ubiquinol to cytochrome c, linking this redox reaction to translocation of protons across the mitochondrial inner membrane, with protons being carried across the membrane as hydrogens on the quinol. In the process called Q cycle, 2 protons are consumed from the matrix, 4 protons are released into the intermembrane space and 2 electrons are passed to cytochrome c. This chain is Cytochrome b-c1 complex subunit 8 (UQCRQ), found in Bos taurus (Bovine).